Consider the following 1297-residue polypeptide: Probable bifunctional E2/E3 enzyme R795 (1297 aa).

The segment at 74–128 adopts an RING-type; atypical zinc-finger fold; sequence CAICRYQENEPCIEHKSSESNTKCPIAQSVSCSHSFHACCISRWLHTKKTCPLCN. In terms of domain architecture, U-box spans 678 to 750; the sequence is EPLQEFLCPI…RDWKENNTVI (73 aa). The VWFA domain occupies 899-1082; the sequence is EMTLEIHSSN…LDIMELETMI (184 aa). The region spanning 1133 to 1279 is the UBC core domain; that stretch reads QKLIRVQREI…IIDYVNKFAL (147 aa). Catalysis depends on cysteine 1217, which acts as the Glycyl thioester intermediate.

In the C-terminal section; belongs to the ubiquitin-conjugating enzyme family.

The catalysed reaction is S-ubiquitinyl-[E2 ubiquitin-conjugating enzyme]-L-cysteine + [acceptor protein]-L-lysine = [E2 ubiquitin-conjugating enzyme]-L-cysteine + N(6)-ubiquitinyl-[acceptor protein]-L-lysine.. It catalyses the reaction S-ubiquitinyl-[E1 ubiquitin-activating enzyme]-L-cysteine + [E2 ubiquitin-conjugating enzyme]-L-cysteine = [E1 ubiquitin-activating enzyme]-L-cysteine + S-ubiquitinyl-[E2 ubiquitin-conjugating enzyme]-L-cysteine.. Its pathway is protein modification; protein ubiquitination. Functionally, catalyzes the covalent attachment of ubiquitin to other proteins. Also acts as an E3 ubiquitin-protein ligase. This chain is Probable bifunctional E2/E3 enzyme R795, found in Acanthamoeba polyphaga (Amoeba).